Consider the following 464-residue polypeptide: GTPase Der (464 aa).

EngA-type G domains follow at residues 3-166 (PTIA…AVES) and 177-350 (LKMA…QAAT). GTP-binding positions include 9–16 (GRPNVGKS), 56–60 (DTGGI), 118–121 (NKVD), 183–190 (GRPNVGKS), 230–234 (DTAGV), and 295–298 (NKWD). In terms of domain architecture, KH-like spans 351–435 (EKYSTSFLTR…PVRIEYRSGD (85 aa)).

The protein belongs to the TRAFAC class TrmE-Era-EngA-EngB-Septin-like GTPase superfamily. EngA (Der) GTPase family. Associates with the 50S ribosomal subunit.

Its function is as follows. GTPase that plays an essential role in the late steps of ribosome biogenesis. In Teredinibacter turnerae (strain ATCC 39867 / T7901), this protein is GTPase Der.